The following is a 369-amino-acid chain: GTPase Obg (369 aa).

The 159-residue stretch at 1–159 (MKFIDEAKIE…RELRLELKVL (159 aa)) folds into the Obg domain. Residues 128–148 (IHFKSSTNRAPRQKSEGKEGE) form a disordered region. The 174-residue stretch at 160–333 (ADIGLLGMPN…LVTEIYDYIA (174 aa)) folds into the OBG-type G domain. GTP is bound by residues 166–173 (GMPNAGKS), 191–195 (FTTLH), 213–216 (DIPG), 283–286 (NKLD), and 314–316 (SAL). Residues Ser-173 and Thr-193 each contribute to the Mg(2+) site.

Belongs to the TRAFAC class OBG-HflX-like GTPase superfamily. OBG GTPase family. As to quaternary structure, monomer. Mg(2+) serves as cofactor.

The protein resides in the cytoplasm. Functionally, an essential GTPase which binds GTP, GDP and possibly (p)ppGpp with moderate affinity, with high nucleotide exchange rates and a fairly low GTP hydrolysis rate. Plays a role in control of the cell cycle, stress response, ribosome biogenesis and in those bacteria that undergo differentiation, in morphogenesis control. This chain is GTPase Obg, found in Herminiimonas arsenicoxydans.